We begin with the raw amino-acid sequence, 242 residues long: MSKQPENSFSSDKFFPIKQKLALEAVALVEPGMCVGLGSGSTAREFILALGDRVRTERLVITAVASSRISQLLAEAVGIPLLDHSLLQDVDLVVDGADEVDPCLRMIKGGGGALFREKILLQSGKRNVILVDERKLVPTLGKFSLPIEIAPFGCSSVQRILNKQGYFGEWRETSAGERFITDNGNYIYDVRTPDSYANPEEDMIRLLQIRGIIDVGFVIAKAEVWVGYADGSIVRKKKHNEY.

Substrate contacts are provided by residues serine 39–threonine 42, aspartate 95–aspartate 98, and lysine 108–glycine 111. Catalysis depends on glutamate 117, which acts as the Proton acceptor. Residue lysine 135 coordinates substrate.

This sequence belongs to the ribose 5-phosphate isomerase family. As to quaternary structure, homodimer.

The enzyme catalyses aldehydo-D-ribose 5-phosphate = D-ribulose 5-phosphate. It participates in carbohydrate degradation; pentose phosphate pathway; D-ribose 5-phosphate from D-ribulose 5-phosphate (non-oxidative stage): step 1/1. Its function is as follows. Catalyzes the reversible conversion of ribose-5-phosphate to ribulose 5-phosphate. The sequence is that of Ribose-5-phosphate isomerase A from Chlamydia trachomatis serovar A (strain ATCC VR-571B / DSM 19440 / HAR-13).